Consider the following 91-residue polypeptide: Protein sigN139 (91 aa).

N-linked (GlcNAc...) asparagine glycosylation is found at Asn23 and Asn34. Residues 46 to 68 form a helical membrane-spanning segment; it reads LLPVVAFISGTVTSITGLVAGAL.

Its subcellular location is the membrane. This is Protein sigN139 from Dictyostelium discoideum (Social amoeba).